Consider the following 807-residue polypeptide: Glycerol-3-phosphate acyltransferase (807 aa).

An HXXXXD motif motif is present at residues 308–313 (CHRSHM).

This sequence belongs to the GPAT/DAPAT family.

The protein localises to the cell inner membrane. The catalysed reaction is sn-glycerol 3-phosphate + an acyl-CoA = a 1-acyl-sn-glycero-3-phosphate + CoA. The protein operates within phospholipid metabolism; CDP-diacylglycerol biosynthesis; CDP-diacylglycerol from sn-glycerol 3-phosphate: step 1/3. The sequence is that of Glycerol-3-phosphate acyltransferase from Shewanella baltica (strain OS223).